The following is a 413-amino-acid chain: Cardiolipin synthase B (413 aa).

2 consecutive PLD phosphodiesterase domains span residues 108–135 (VFRR…SAEH) and 285–312 (RRRP…DPLS). Active-site residues include His-113, Lys-115, Asp-120, His-290, Lys-292, and Asp-297. A disordered region spans residues 390–413 (VGPPAQPTMETQDRVETENTGVKP).

The protein belongs to the phospholipase D family. Cardiolipin synthase subfamily. ClsB sub-subfamily.

It is found in the cell membrane. It catalyses the reaction 2 a 1,2-diacyl-sn-glycero-3-phospho-(1'-sn-glycerol) = a cardiolipin + glycerol. In terms of biological role, catalyzes the phosphatidyl group transfer from one phosphatidylglycerol molecule to another to form cardiolipin (CL) (diphosphatidylglycerol) and glycerol. This chain is Cardiolipin synthase B, found in Escherichia coli O6:H1 (strain CFT073 / ATCC 700928 / UPEC).